Consider the following 418-residue polypeptide: Actin-related protein 3B (418 aa).

It belongs to the actin family. ARP3 subfamily. As to quaternary structure, interacts with the Arp2/3 complex composed of ARP2, ARP3, ARPC1B, ARPC1B/p41-ARC, ARPC2/p34-ARC, ARPC3/p21-ARC, ARPC4/p20-ARC and ARPC5/p16-ARC. Detected in fetal brain. Detected throughout the adult brain, in neurons from gray matter, but not in white matter. Detected in liver, skeletal muscle and pancreas. Detected in lung adenocarcinoma cells with low metastatic potential, but not in lung adenocarcinoma cells with high metastatic potential.

Its subcellular location is the cytoplasm. The protein resides in the cytoskeleton. It is found in the cell projection. In terms of biological role, plays a role in the organization of the actin cytoskeleton. May function as ATP-binding component of the Arp2/3 complex which is involved in regulation of actin polymerization and together with an activating nucleation-promoting factor (NPF) mediates the formation of branched actin networks. May decrease the metastatic potential of tumors. The polypeptide is Actin-related protein 3B (ACTR3B) (Homo sapiens (Human)).